Here is a 1132-residue protein sequence, read N- to C-terminus: Phosphatidylinositide phosphatase SAC2 (1132 aa).

The region spanning 167–518 (LKMFMDSESF…GDSISRQYAG (352 aa)) is the SAC domain. The tract at residues 250–269 (ESSDDDKSSPETPPQDSTCV) is disordered. Residues 593–760 (RSHQELISQL…KSSKPHEDII (168 aa)) enclose the hSac2 domain. Phosphoserine occurs at positions 714, 827, and 830. Residues 833–872 (TMENPGVMGNKVQGESDGDISSDNDSYHSDEFLTNSKSEE) form a disordered region. Residues 857–872 (DSYHSDEFLTNSKSEE) are compositionally biased toward basic and acidic residues. Phosphoserine is present on residues Ser-879, Ser-882, Ser-908, and Ser-911. 2 stretches are compositionally biased toward polar residues: residues 908 to 918 (SASSIDVSTHA) and 994 to 1005 (RVSNEETQSEPM). 2 disordered regions span residues 908–951 (SASS…HTRT) and 981–1016 (VAQKSEEGSHKTNRVSNEETQSEPMGQTPPRPSQLN). The residue at position 1103 (Ser-1103) is a Phosphoserine.

Homodimer. Interacts with OCRL and RAB5. Interacts with INPP5B and INPP4A. Interacts with STAT3; the interaction is independent of STAT3 'Tyr-705' phosphorylation status. Highly expressed in brain and hypothalamus, expressed in lung and pancreas, and detected at low levels in liver and heart (at protein level).

It is found in the membrane. The protein localises to the clathrin-coated pit. Its subcellular location is the early endosome. It localises to the recycling endosome. The enzyme catalyses a myo-inositol phosphate + H2O = myo-inositol + phosphate. Functionally, inositol 4-phosphatase which mainly acts on phosphatidylinositol 4-phosphate. May be functionally linked to OCRL, which converts phosphatidylinositol 4,5-bisphosphate to phosphatidylinositol, for a sequential dephosphorylation of phosphatidylinositol 4,5-bisphosphate at the 5 and 4 position of inositol, thus playing an important role in the endocytic recycling. Regulator of TF:TFRC and integrins recycling pathway, is also involved in cell migration mechanisms. Modulates AKT/GSK3B pathway by decreasing AKT and GSK3B phosphorylation. Negatively regulates STAT3 signaling pathway through inhibition of STAT3 phosphorylation and translocation to the nucleus. Functionally important modulator of cardiac myocyte size and of the cardiac response to stress. May play a role as negative regulator of axon regeneration after central nervous system injuries. The polypeptide is Phosphatidylinositide phosphatase SAC2 (Mus musculus (Mouse)).